Reading from the N-terminus, the 109-residue chain is Period circadian protein (109 aa).

Composition is skewed to polar residues over residues 42 to 56 (QSYS…NLSP) and 68 to 80 (SSRN…NLNM). The interval 42–109 (QSYSTPANTG…LVTLTESLLK (68 aa)) is disordered. Over residues 81-97 (GSVTNTSNTGTGTSSGS) the composition is skewed to low complexity.

In terms of assembly, forms a heterodimer with timeless (TIM); the complex then translocates into the nucleus. Post-translationally, phosphorylated with a circadian rhythmicity, probably by the double-time protein (dbt). Phosphorylation could be implicated in the stability of per monomer and in the formation of heterodimer per-tim.

It localises to the nucleus. The protein localises to the cytoplasm. Its subcellular location is the perinuclear region. Its function is as follows. Essential for biological clock functions. Determines the period length of circadian and ultradian rhythms; an increase in PER dosage leads to shortened circadian rhythms and a decrease leads to lengthened circadian rhythms. Essential for the circadian rhythmicity of locomotor activity, eclosion behavior, and for the rhythmic component of the male courtship song that originates in the thoracic nervous system. The biological cycle depends on the rhythmic formation and nuclear localization of the TIM-PER complex. Light induces the degradation of TIM, which promotes elimination of PER. Nuclear activity of the heterodimer coordinatively regulates PER and TIM transcription through a negative feedback loop. Behaves as a negative element in circadian transcriptional loop. Does not appear to bind DNA, suggesting indirect transcriptional inhibition. This Musca domestica (House fly) protein is Period circadian protein (per).